A 512-amino-acid chain; its full sequence is Class E vacuolar protein-sorting machinery protein HSE1 (512 aa).

One can recognise a VHS domain in the interval 22–153 (ATDETLTNDN…RLVNDYSQYS (132 aa)). Disordered stretches follow at residues 153–180 (SAET…EDEL) and 200–253 (SYLN…ESQT). Residues 164-180 (AKKERSRQDKKKEEDEL) show a composition bias toward basic and acidic residues. The UIM domain maps to 175 to 194 (KEEDELQRVLKLSLQEYERE). Low complexity predominate over residues 215–233 (QYQEQPRQQQQQQQVLQNQ). Positions 234 to 253 (PMHSTPTGQQSTQSPAESQT) are enriched in polar residues. In terms of domain architecture, SH3 spans 255–315 (ATVSKVRALY…PLNYVTPVVT (61 aa)). Residues 411–512 (RVTHQPSGMS…INNFPNVNNI (102 aa)) are disordered. The segment covering 429–476 (ASPTHSSFSQANPSMLHQQPTSSGFGNARGNSSNEYFHSQQVPPTSFN) has biased composition (polar residues). Positions 502-512 (NINNFPNVNNI) are enriched in low complexity.

It belongs to the STAM family. As to quaternary structure, component of the ESCRT-0 complex composed of HSE1 and VPS27.

Its subcellular location is the endosome membrane. Its function is as follows. Component of the ESCRT-0 complex which is the sorting receptor for ubiquitinated cargo proteins at the multivesicular body (MVB). This chain is Class E vacuolar protein-sorting machinery protein HSE1 (HSE1), found in Debaryomyces hansenii (strain ATCC 36239 / CBS 767 / BCRC 21394 / JCM 1990 / NBRC 0083 / IGC 2968) (Yeast).